A 249-amino-acid polypeptide reads, in one-letter code: Probable transcriptional regulatory protein DICTH_1505 (249 aa).

Belongs to the TACO1 family.

The protein resides in the cytoplasm. This chain is Probable transcriptional regulatory protein DICTH_1505, found in Dictyoglomus thermophilum (strain ATCC 35947 / DSM 3960 / H-6-12).